Reading from the N-terminus, the 787-residue chain is ISWI one complex protein 3 (787 aa).

Positions 1-22 are enriched in polar residues; the sequence is MDSPSNSIQNLQQEAQGSSSAQ. Disordered stretches follow at residues 1-137, 672-693, and 749-787; these read MDSP…AHEQ, ILEQKSTTDNNPSINTNPLPKD, and TEYDSEEYVDDEEDDEADIYDDNDNDSSFDDGRVKRQRT. The span at 40 to 50 shows a compositional bias: low complexity; it reads DQSVSVSQSSD. Residues 79-92 show a composition bias toward basic residues; that stretch reads KPKRKRPAPPKKKA. Residues 100 to 137 show a composition bias toward basic and acidic residues; sequence SNDKVEKKKTTSIAKDGKPTLKTNDKKVAPKPKPAHEQ. Residues 675 to 689 show a composition bias toward polar residues; the sequence is QKSTTDNNPSINTNP. The span at 751 to 777 shows a compositional bias: acidic residues; it reads YDSEEYVDDEEDDEADIYDDNDNDSSF. The segment covering 778–787 has biased composition (basic and acidic residues); the sequence is DDGRVKRQRT.

As to quaternary structure, component of the ISW1A complex, which at least consists of ISW1 and IOC3.

Its subcellular location is the nucleus. Functions as a component of the ISW1A complex, which acts in remodeling the chromatin by catalyzing an ATP-dependent alteration in the structure of nucleosomal DNA. The ISW1A complex represses gene expression at initiation through specific positioning of a promoter proximal dinucleosome. This is ISWI one complex protein 3 (IOC3) from Saccharomyces cerevisiae (strain ATCC 204508 / S288c) (Baker's yeast).